Consider the following 172-residue polypeptide: Signal peptidase complex catalytic subunit SEC11 (172 aa).

The Cytoplasmic portion of the chain corresponds to 1-14 (MLSSLANPRQAASQ). The helical; Signal-anchor for type II membrane protein transmembrane segment at 15-35 (LLNFALILSTAFMMWKGLSVV) threads the bilayer. At 36-172 (SDSPSPIVVV…MGLVVVLQRE (137 aa)) the chain is on the lumenal side. Catalysis depends on charge relay system residues S49, H90, and D115. The interval 158 to 169 (AMLGIMGLVVVL) is C-terminal short (CTS) helix.

It belongs to the peptidase S26B family. In terms of assembly, component of the signal peptidase complex (SPC) composed of a catalytic subunit SEC11 and three accessory subunits SPC1, SPC2 and SPC3. The complex induces a local thinning of the ER membrane which is used to measure the length of the signal peptide (SP) h-region of protein substrates. This ensures the selectivity of the complex towards h-regions shorter than 18-20 amino acids. SPC associates with the translocon complex.

Its subcellular location is the endoplasmic reticulum membrane. The catalysed reaction is Cleavage of hydrophobic, N-terminal signal or leader sequences from secreted and periplasmic proteins.. Catalytic component of the signal peptidase complex (SPC) which catalyzes the cleavage of N-terminal signal sequences from nascent proteins as they are translocated into the lumen of the endoplasmic reticulum. Specifically cleaves N-terminal signal peptides that contain a hydrophobic alpha-helix (h-region) shorter than 18-20 amino acids. The sequence is that of Signal peptidase complex catalytic subunit SEC11 (SEC11) from Colletotrichum graminicola (strain M1.001 / M2 / FGSC 10212) (Maize anthracnose fungus).